The sequence spans 274 residues: Pyridoxal phosphate homeostasis protein (274 aa).

Residue Ser6 is modified to Phosphoserine. Lys47 bears the N6-(pyridoxal phosphate)lysine mark. At Tyr69 the chain carries Phosphotyrosine. Lys125 carries the N6-succinyllysine modification. Residues Ser226 and Ser244 each carry the phosphoserine modification.

It belongs to the pyridoxal phosphate-binding protein YggS/PROSC family.

Functionally, pyridoxal 5'-phosphate (PLP)-binding protein, which may be involved in intracellular homeostatic regulation of pyridoxal 5'-phosphate (PLP), the active form of vitamin B6. This Mus musculus (Mouse) protein is Pyridoxal phosphate homeostasis protein.